The primary structure comprises 571 residues: NADH-quinone oxidoreductase subunit C/D (571 aa).

The interval 1–171 is NADH dehydrogenase I subunit C; the sequence is MQASEKTLNE…NLSNTMNYRR (171 aa). The segment at 194-571 is NADH dehydrogenase I subunit D; the sequence is AQVVLNWGPL…LDPVVGEVDR (378 aa).

It in the N-terminal section; belongs to the complex I 30 kDa subunit family. In the C-terminal section; belongs to the complex I 49 kDa subunit family. NDH-1 is composed of 13 different subunits. Subunits NuoB, CD, E, F, and G constitute the peripheral sector of the complex.

It is found in the cell inner membrane. It carries out the reaction a quinone + NADH + 5 H(+)(in) = a quinol + NAD(+) + 4 H(+)(out). Functionally, NDH-1 shuttles electrons from NADH, via FMN and iron-sulfur (Fe-S) centers, to quinones in the respiratory chain. The immediate electron acceptor for the enzyme in this species is believed to be ubiquinone. Couples the redox reaction to proton translocation (for every two electrons transferred, four hydrogen ions are translocated across the cytoplasmic membrane), and thus conserves the redox energy in a proton gradient. This Hydrogenobaculum sp. (strain Y04AAS1) protein is NADH-quinone oxidoreductase subunit C/D (nuoC).